The chain runs to 221 residues: Transcription factor HES-4 (221 aa).

The segment covering Met1 to Ser22 has biased composition (low complexity). A disordered region spans residues Met1 to Arg49. A compositionally biased stretch (basic and acidic residues) spans Thr24 to Arg35. A bHLH domain is found at His34 to Leu91. Residues Tyr110 to Leu143 form the Orange domain. Residues Leu201–Arg221 form a disordered region. The WRPW motif motif lies at Trp216–Trp219.

In terms of assembly, transcription repression requires formation of a complex with a corepressor protein of the Groucho/TLE family.

It is found in the nucleus. In terms of biological role, transcriptional repressor. Binds DNA on N-box motifs: 5'-CACNAG-3'. This is Transcription factor HES-4 (HES4) from Homo sapiens (Human).